The following is a 73-amino-acid chain: Mucroporin-like peptide (73 aa).

Residues 1–22 (MKVKCLLAVFLIVLIAAEHCQA) form the signal peptide. Lys-38 carries the post-translational modification Lysine amide. Residues 44-73 (ELGTQFQPRQKNFMRREVDLERLFAEMPDY) constitute a propeptide that is removed on maturation.

This sequence belongs to the non-disulfide-bridged peptide (NDBP) superfamily. Short antimicrobial peptide (group 4) family. As to expression, expressed by the venom gland.

It is found in the secreted. Its subcellular location is the target cell membrane. In terms of biological role, cationic host defense peptide that have antibacterial activity by breaking membranes. Is more effective on Gram-positive than on Gram-negative bacteria. In Lychas mucronatus (Chinese swimming scorpion), this protein is Mucroporin-like peptide.